We begin with the raw amino-acid sequence, 252 residues long: dITP/XTP pyrophosphatase (252 aa).

7 to 12 (THNEGK) is a substrate binding site. D74 serves as the catalytic Proton acceptor. D74 contributes to the Mg(2+) binding site. Residues S75 and 193–196 (FGYD) contribute to the substrate site. The tract at residues 202-229 (DDQPAGRVSTEPDHEGEPLTSAEMTPAE) is disordered. Substrate contacts are provided by residues K230 and 235-236 (HR).

It belongs to the HAM1 NTPase family. In terms of assembly, homodimer. It depends on Mg(2+) as a cofactor.

The catalysed reaction is XTP + H2O = XMP + diphosphate + H(+). It catalyses the reaction dITP + H2O = dIMP + diphosphate + H(+). It carries out the reaction ITP + H2O = IMP + diphosphate + H(+). Pyrophosphatase that catalyzes the hydrolysis of nucleoside triphosphates to their monophosphate derivatives, with a high preference for the non-canonical purine nucleotides XTP (xanthosine triphosphate), dITP (deoxyinosine triphosphate) and ITP. Seems to function as a house-cleaning enzyme that removes non-canonical purine nucleotides from the nucleotide pool, thus preventing their incorporation into DNA/RNA and avoiding chromosomal lesions. In Bifidobacterium longum (strain NCC 2705), this protein is dITP/XTP pyrophosphatase.